Reading from the N-terminus, the 51-residue chain is Large ribosomal subunit protein eL39-like (51 aa).

Belongs to the eukaryotic ribosomal protein eL39 family. As to quaternary structure, component of a male germ cell-specific 60S large ribosomal subunit (LSU), which contains RPL10L and RPL39L, instead of RPL10 and RPL39 paralogs. The composition of the rest of the complex is similar to classical ribosomes. Highly expressed in spermatocytes and spermatids. Highly expressed in embryonic stem cells.

Its subcellular location is the cytoplasm. Male germ cell-specific component of the ribosome, which is required for the formation of sperm and male fertility. Replaces the RPL39 paralog in the ribosome of male germ cells. The ribosome is a large ribonucleoprotein complex responsible for the synthesis of proteins in the cell. The male germ cell-specific ribosome displays a ribosomal polypeptide exit tunnel of distinct size and charge states compared with the classical ribosome. It is responsible for regulating the biosynthesis and folding of a subset of male germ-cell-specific proteins that are essential for the formation of sperm. This chain is Large ribosomal subunit protein eL39-like, found in Mus musculus (Mouse).